Here is a 445-residue protein sequence, read N- to C-terminus: MDIKNVTETISMIEEQNFDIRTITMGISLLDCIDSDINKACDKIYAKITTKAKDLVRVGNEISAELGIPIVNKRVSVTPISIIGAATNASDYVMIAKTLDRAAIEVGIDFIGGFSALVQKGYQKGDEILINSIPQALAQTAKVCSSVNVGSTKSGINMSAVRDMGRIIKETAAASEMGCAKLVVFANAVEDNPFMAGAFHGVGEADVVINVGVSGPGVVKRALEKVRGESFDVVAETVKKTAFKITRIGQLVGQMASERLGVKFGIVDLSLAPTPAVGDSVARVLEEMGLEAVGTHGTTAALALLNDAVKKGGVMACNQVGGLSGAFIPVSEDEGMIAAVRAGSLNLEKLEAMTAICSVGLDMIAIPADTPSESIAAMIADEAAIGVINQKTTAVRIIPLGREGDMIEFGGLLGRAPVMKINKASSADFIARGGQIPAPIHSFKN.

This sequence belongs to the UPF0210 family. As to quaternary structure, homodimer.

This is UPF0210 protein Ccon26_06850 from Campylobacter concisus (strain 13826).